Consider the following 446-residue polypeptide: Exodeoxyribonuclease 7 large subunit (446 aa).

It belongs to the XseA family. In terms of assembly, heterooligomer composed of large and small subunits.

It is found in the cytoplasm. The enzyme catalyses Exonucleolytic cleavage in either 5'- to 3'- or 3'- to 5'-direction to yield nucleoside 5'-phosphates.. Bidirectionally degrades single-stranded DNA into large acid-insoluble oligonucleotides, which are then degraded further into small acid-soluble oligonucleotides. In Streptococcus gordonii (strain Challis / ATCC 35105 / BCRC 15272 / CH1 / DL1 / V288), this protein is Exodeoxyribonuclease 7 large subunit.